Reading from the N-terminus, the 147-residue chain is 3-hydroxyacyl-[acyl-carrier-protein] dehydratase FabZ (147 aa).

His49 is an active-site residue.

The protein belongs to the thioester dehydratase family. FabZ subfamily.

It localises to the cytoplasm. It catalyses the reaction a (3R)-hydroxyacyl-[ACP] = a (2E)-enoyl-[ACP] + H2O. In terms of biological role, involved in unsaturated fatty acids biosynthesis. Catalyzes the dehydration of short chain beta-hydroxyacyl-ACPs and long chain saturated and unsaturated beta-hydroxyacyl-ACPs. The polypeptide is 3-hydroxyacyl-[acyl-carrier-protein] dehydratase FabZ (Alkaliphilus metalliredigens (strain QYMF)).